Reading from the N-terminus, the 87-residue chain is MARVTVEDCLEHVDNRFELVMLSTKRARQLATGGKEPKLAWENDKPTVMALREIAAGLMDYAVIAEAEIVEDEPLFAAFEDESNEAV.

It belongs to the RNA polymerase subunit omega family. In terms of assembly, the RNAP catalytic core consists of 2 alpha, 1 beta, 1 beta' and 1 omega subunit. When a sigma factor is associated with the core the holoenzyme is formed, which can initiate transcription.

The enzyme catalyses RNA(n) + a ribonucleoside 5'-triphosphate = RNA(n+1) + diphosphate. Its function is as follows. Promotes RNA polymerase assembly. Latches the N- and C-terminal regions of the beta' subunit thereby facilitating its interaction with the beta and alpha subunits. This chain is DNA-directed RNA polymerase subunit omega, found in Pseudomonas savastanoi pv. phaseolicola (strain 1448A / Race 6) (Pseudomonas syringae pv. phaseolicola (strain 1448A / Race 6)).